Here is a 224-residue protein sequence, read N- to C-terminus: Probable C-&gt;U-editing enzyme APOBEC-2 (224 aa).

Residues 1 to 25 (MAQKEEAAAATEAASQNGEDLENLD) are disordered. Residues E60 and H98 each contribute to the Zn(2+) site. Residues 64 to 169 (GRNKTFLCYV…LEIQDALKKL (106 aa)) form the CMP/dCMP-type deaminase domain. E100 (proton donor) is an active-site residue. Zn(2+) is bound by residues C128 and C131.

The protein belongs to the cytidine and deoxycytidylate deaminase family. In terms of assembly, homotetramer. Zn(2+) serves as cofactor.

The catalysed reaction is cytidine(6666) in apoB mRNA + H2O + H(+) = uridine(6666) in apoB mRNA + NH4(+). In terms of biological role, probable C to U editing enzyme whose physiological substrate is not yet known. Does not display detectable apoB mRNA editing. Has a low intrinsic cytidine deaminase activity. May play a role in the epigenetic regulation of gene expression through the process of active DNA demethylation. The protein is Probable C-&gt;U-editing enzyme APOBEC-2 (APOBEC2) of Pongo pygmaeus (Bornean orangutan).